The chain runs to 164 residues: MSTFSGDETAPFFGFLGAAAALVFSCMGAAYGTAKSGVGVASMGVMRPELVMKSIVPVVMAGVLGIYGLIIAVIISTGINPKAKSYYLFDGYAHLSSGLACGLAGLSAGMAIGIVGDAGVRANAQQPKLFVGMILILIFAEALALYGLIVGIILSSRAGQSRAE.

Residues 1–11 lie on the Lumenal side of the membrane; sequence MSTFSGDETAP. Residues 12 to 32 form a helical membrane-spanning segment; that stretch reads FFGFLGAAAALVFSCMGAAYG. Topologically, residues 33–54 are cytoplasmic; it reads TAKSGVGVASMGVMRPELVMKS. A helical membrane pass occupies residues 55-75; that stretch reads IVPVVMAGVLGIYGLIIAVII. The Lumenal portion of the chain corresponds to 76-94; that stretch reads STGINPKAKSYYLFDGYAH. The helical transmembrane segment at 95–116 threads the bilayer; that stretch reads LSSGLACGLAGLSAGMAIGIVG. The Cytoplasmic segment spans residues 117 to 128; the sequence is DAGVRANAQQPK. Residues 129–154 form a helical membrane-spanning segment; sequence LFVGMILILIFAEALALYGLIVGIIL. At 155-164 the chain is on the lumenal side; the sequence is SSRAGQSRAE.

It belongs to the V-ATPase proteolipid subunit family. As to quaternary structure, V-ATPase is a heteromultimeric enzyme composed of a peripheral catalytic V1 complex (components A to H) attached to an integral membrane V0 proton pore complex (components: a, c, c'', d and e). The proteolipid components c and c'' are present as a hexameric ring that forms the proton-conducting pore. In terms of tissue distribution, expressed in leaf, root, flower and silique.

The protein resides in the vacuole membrane. Its function is as follows. Proton-conducting pore forming subunit of the membrane integral V0 complex of vacuolar ATPase. V-ATPase is responsible for acidifying a variety of intracellular compartments in eukaryotic cells. The polypeptide is V-type proton ATPase subunit c3 (VHA-c3) (Arabidopsis thaliana (Mouse-ear cress)).